The chain runs to 161 residues: 6,7-dimethyl-8-ribityllumazine synthase (161 aa).

5-amino-6-(D-ribitylamino)uracil is bound by residues tryptophan 31, 63-65, and 85-87; these read SFE and VVI. 90-91 contacts (2S)-2-hydroxy-3-oxobutyl phosphate; sequence GT. The active-site Proton donor is the histidine 93. Residue phenylalanine 118 participates in 5-amino-6-(D-ribitylamino)uracil binding. Arginine 132 contributes to the (2S)-2-hydroxy-3-oxobutyl phosphate binding site.

It belongs to the DMRL synthase family.

It catalyses the reaction (2S)-2-hydroxy-3-oxobutyl phosphate + 5-amino-6-(D-ribitylamino)uracil = 6,7-dimethyl-8-(1-D-ribityl)lumazine + phosphate + 2 H2O + H(+). The protein operates within cofactor biosynthesis; riboflavin biosynthesis; riboflavin from 2-hydroxy-3-oxobutyl phosphate and 5-amino-6-(D-ribitylamino)uracil: step 1/2. Functionally, catalyzes the formation of 6,7-dimethyl-8-ribityllumazine by condensation of 5-amino-6-(D-ribitylamino)uracil with 3,4-dihydroxy-2-butanone 4-phosphate. This is the penultimate step in the biosynthesis of riboflavin. This chain is 6,7-dimethyl-8-ribityllumazine synthase, found in Arthrobacter sp. (strain FB24).